The chain runs to 105 residues: MSAKIRSGDDVIVLTGRDRGKIGKVIKIVTCSAKRKAVVSGINVHKKHAKPKAGSSGGIINKELAIDISNIAILDPKYKAPTRVGFKVIDSKKVRFAKVSGEVIG.

It belongs to the universal ribosomal protein uL24 family. Part of the 50S ribosomal subunit.

In terms of biological role, one of two assembly initiator proteins, it binds directly to the 5'-end of the 23S rRNA, where it nucleates assembly of the 50S subunit. One of the proteins that surrounds the polypeptide exit tunnel on the outside of the subunit. This is Large ribosomal subunit protein uL24 from Wolbachia sp. subsp. Brugia malayi (strain TRS).